The chain runs to 396 residues: Elongation factor Tu (396 aa).

The 197-residue stretch at 10-206 folds into the tr-type G domain; it reads KPHVNIGTIG…AVDSYIPDPE (197 aa). The G1 stretch occupies residues 19–26; that stretch reads GHVDHGKT. Residue 19–26 coordinates GTP; it reads GHVDHGKT. A Mg(2+)-binding site is contributed by threonine 26. Positions 60–64 are G2; that stretch reads GITIA. The interval 81 to 84 is G3; it reads DCPG. Residues 81–85 and 136–139 each bind GTP; these read DCPGH and NKAD. The G4 stretch occupies residues 136–139; the sequence is NKAD. The tract at residues 174–176 is G5; it reads SAL.

Belongs to the TRAFAC class translation factor GTPase superfamily. Classic translation factor GTPase family. EF-Tu/EF-1A subfamily. Monomer.

Its subcellular location is the cytoplasm. The catalysed reaction is GTP + H2O = GDP + phosphate + H(+). Its function is as follows. GTP hydrolase that promotes the GTP-dependent binding of aminoacyl-tRNA to the A-site of ribosomes during protein biosynthesis. This is Elongation factor Tu from Pelobacter propionicus (strain DSM 2379 / NBRC 103807 / OttBd1).